A 584-amino-acid chain; its full sequence is Potassium-transporting ATPase potassium-binding subunit (584 aa).

10 helical membrane passes run 8–28 (FLVLIGVILALLLIPTGEFMF), 65–85 (SFAVAMMIFSVIGIVFVFILQ), 139–159 (VQNFMSAAVGMVVLVAFIYGF), 172–192 (VLLLRSIWILLPLSFVIALVL), 262–282 (FTDLVEIVAILLIPVSLCFMF), 292–312 (GIAILIAMMILFVPLLGLGIW), 398–418 (GLYCMLVFVIIAMFIAGLMVG), 440–460 (ILIPIFLILIGTAIAVSITAG), 507–527 (MFVGRYAIAIITLALAGAFVA), and 544–564 (LFIIWVVFTILIIGALSFLPA).

This sequence belongs to the KdpA family. In terms of assembly, the system is composed of three essential subunits: KdpA, KdpB and KdpC.

It is found in the cell membrane. Its function is as follows. Part of the high-affinity ATP-driven potassium transport (or Kdp) system, which catalyzes the hydrolysis of ATP coupled with the electrogenic transport of potassium into the cytoplasm. This subunit binds the extracellular potassium ions and delivers the ions to the membrane domain of KdpB through an intramembrane tunnel. The sequence is that of Potassium-transporting ATPase potassium-binding subunit from Methanoregula boonei (strain DSM 21154 / JCM 14090 / 6A8).